A 207-amino-acid polypeptide reads, in one-letter code: MTGHVRPFVIGVAGGSGSGKTTVTRRVIETVGGNGVSVLNQDNYYRDQSDIPFNARLNTNYDHPAAFDWPLLRSHLDALLSGVPIDMPEYDFTQHTRSAQASTVLPGAVVVLEGFFALYDEELRERMHLKVFVDADADVRFIRRLLRDTQERGRTPESVIQQYLEYVRPMHLSFVEPTKRYADVIIPHGGMNEPALDMLSARIRTTI.

Residue 14-21 (GGSGSGKT) participates in ATP binding.

It belongs to the uridine kinase family.

The protein resides in the cytoplasm. The enzyme catalyses uridine + ATP = UMP + ADP + H(+). It carries out the reaction cytidine + ATP = CMP + ADP + H(+). The protein operates within pyrimidine metabolism; CTP biosynthesis via salvage pathway; CTP from cytidine: step 1/3. Its pathway is pyrimidine metabolism; UMP biosynthesis via salvage pathway; UMP from uridine: step 1/1. In Deinococcus deserti (strain DSM 17065 / CIP 109153 / LMG 22923 / VCD115), this protein is Uridine kinase.